We begin with the raw amino-acid sequence, 524 residues long: Cytosolic Fe-S cluster assembly factor NAR1 (524 aa).

Residues Cys-20, Cys-52, Cys-55, Cys-58, Cys-158, and Cys-206 each coordinate [4Fe-4S] cluster. Positions 362–388 (IRKRPTANGNDNSISLSSSINNQDNNN) are disordered. A compositionally biased stretch (low complexity) spans 369–388 (NGNDNSISLSSSINNQDNNN). [4Fe-4S] cluster is bound by residues Cys-408 and Cys-412. Residues 501 to 524 (SSISETHNGDSKNTIEQPVQFTTW) form a disordered region.

The protein belongs to the NARF family.

In terms of biological role, component of the cytosolic Fe/S protein assembly machinery. Required for maturation of extramitochondrial Fe/S proteins. May play a role in the transfer of pre-assembled Fe/S clusters to target apoproteins. This is Cytosolic Fe-S cluster assembly factor NAR1 (NAR1) from Vanderwaltozyma polyspora (strain ATCC 22028 / DSM 70294 / BCRC 21397 / CBS 2163 / NBRC 10782 / NRRL Y-8283 / UCD 57-17) (Kluyveromyces polysporus).